A 663-amino-acid chain; its full sequence is Alcohol oxidase (663 aa).

8 to 39 (DVIVCGGGSTGCVIAGRLANVDENLKVLLIEN) lines the FAD pocket. Residue His567 is the Proton acceptor of the active site. The short motif at 661 to 663 (ARY) is the Microbody targeting signal element.

It belongs to the GMC oxidoreductase family. As to quaternary structure, homooctamer. Requires FAD as cofactor.

It localises to the peroxisome matrix. The enzyme catalyses a primary alcohol + O2 = an aldehyde + H2O2. The protein operates within energy metabolism; methane degradation. Its function is as follows. Catalyzes the oxidation of methanol to formaldehyde and hydrogen peroxide, the first step in the methanol utilization pathway of methylotrophic yeasts. In Candida boidinii (Yeast), this protein is Alcohol oxidase (AOD1).